Reading from the N-terminus, the 431-residue chain is RNA-binding motif, single-stranded-interacting protein 3 (431 aa).

The segment at 28 to 53 is disordered; that stretch reads YAPAPHPMAPPSPSTNSSSNSSGEQL. Residues 31-40 show a composition bias toward pro residues; the sequence is APHPMAPPSP. RRM domains lie at 56 to 129 and 135 to 220; these read TNLY…MAKQ and TNLY…FADG. Disordered regions lie at residues 220-242 and 393-431; these read GGQK…PREG and TSPQ…QSKP. The segment covering 401-411 has biased composition (low complexity); it reads SSQDSSGQQQQ.

The protein localises to the cytoplasm. Binds poly(A) and poly(U) oligoribonucleotides. The polypeptide is RNA-binding motif, single-stranded-interacting protein 3 (Rbms3) (Mus musculus (Mouse)).